A 230-amino-acid polypeptide reads, in one-letter code: Small ribosomal subunit protein uS3 (230 aa).

In terms of domain architecture, KH type-2 spans 39-107 (IRKFLTEKLK…PAQINISEVR (69 aa)).

It belongs to the universal ribosomal protein uS3 family. In terms of assembly, part of the 30S ribosomal subunit. Forms a tight complex with proteins S10 and S14.

Functionally, binds the lower part of the 30S subunit head. Binds mRNA in the 70S ribosome, positioning it for translation. The polypeptide is Small ribosomal subunit protein uS3 (Psychromonas ingrahamii (strain DSM 17664 / CCUG 51855 / 37)).